We begin with the raw amino-acid sequence, 212 residues long: Inactive ribonuclease-like protein 10 (212 aa).

The signal sequence occupies residues 1 to 24 (MKVTLVHLLFMMLLLLLGLGVGLG). N-linked (GlcNAc...) asparagine glycosylation is found at Asn-129 and Asn-204.

Belongs to the pancreatic ribonuclease family. The N-terminus is blocked. Glycosylated. In terms of tissue distribution, male-specific expression in proximal caput of the epididymis.

Its subcellular location is the secreted. Functionally, secreted proximal epididymal protein required for post-testicular sperm maturation and male fertility. May be involved in sperm adhesion to the egg zona pellucida. Does not have ribonuclease activity. This is Inactive ribonuclease-like protein 10 (Rnase10) from Rattus norvegicus (Rat).